The sequence spans 394 residues: Elongation factor Tu 2 (394 aa).

One can recognise a tr-type G domain in the interval 10-204 (KPHVNVGTIG…YLDTYIPEPE (195 aa)). The tract at residues 19–26 (GHVDHGKT) is G1. 19-26 (GHVDHGKT) is a GTP binding site. Thr-26 serves as a coordination point for Mg(2+). A G2 region spans residues 60 to 64 (GITIN). A G3 region spans residues 81–84 (DCPG). Residues 81-85 (DCPGH) and 136-139 (NKCD) each bind GTP. Positions 136–139 (NKCD) are G4. The segment at 174-176 (SAL) is G5.

The protein belongs to the TRAFAC class translation factor GTPase superfamily. Classic translation factor GTPase family. EF-Tu/EF-1A subfamily. Monomer.

The protein localises to the cytoplasm. It catalyses the reaction GTP + H2O = GDP + phosphate + H(+). GTP hydrolase that promotes the GTP-dependent binding of aminoacyl-tRNA to the A-site of ribosomes during protein biosynthesis. The polypeptide is Elongation factor Tu 2 (Yersinia enterocolitica serotype O:8 / biotype 1B (strain NCTC 13174 / 8081)).